Reading from the N-terminus, the 535-residue chain is Probable C4-dicarboxylate sensor kinase (535 aa).

The Cytoplasmic portion of the chain corresponds to 1–11 (MNKKKLSIRWK). Residues 12 to 32 (ITILSYILVIFSFLIGGIVLI) form a helical membrane-spanning segment. The Extracellular portion of the chain corresponds to 33–172 (GNIQHTEERE…IADILLHLKR (140 aa)). The chain crosses the membrane as a helical span at residues 173-193 (DIAFIVVLTLGFGLAGSFLLA). Topologically, residues 194–535 (RHIKKQMFQL…MKGEEAQHGS (342 aa)) are cytoplasmic. The PAS domain maps to 213 to 276 (EERTATFHSM…PEIVERNKAV (64 aa)). The region spanning 333 to 528 (VQNHEHMNKL…SFSIVFPMKG (196 aa)) is the Histidine kinase domain. Phosphohistidine; by autocatalysis is present on histidine 336.

The protein resides in the cell membrane. It carries out the reaction ATP + protein L-histidine = ADP + protein N-phospho-L-histidine.. Its function is as follows. Member of the two-component regulatory system DctS/DctR. Probably activates DctR by phosphorylation. Essential for expression of dctP. The polypeptide is Probable C4-dicarboxylate sensor kinase (dctS) (Bacillus subtilis (strain 168)).